Here is a 67-residue protein sequence, read N- to C-terminus: Alpha-conotoxin-like Pu1.1 (67 aa).

Residues 1 to 21 form the signal peptide; that stretch reads MGMRMMFTVFLLVVLATTVVS. Residues 22–46 constitute a propeptide that is removed on maturation; sequence FTSDRTSDGRNAAFNAFDLIALTAR. Gln-47 is subject to Pyrrolidone carboxylic acid. Intrachain disulfides connect Cys-49-Cys-55 and Cys-50-Cys-63. Positions 51–53 are lacks the Ser-Xaa-Pro motif that is crucial for potent interaction with nAChR; that stretch reads NVP. Cys-63 is modified (cysteine amide).

Belongs to the conotoxin A superfamily. As to expression, expressed by the venom duct.

The protein localises to the secreted. Functionally, alpha-conotoxins act on postsynaptic membranes, they bind to the nicotinic acetylcholine receptors (nAChR) and thus inhibit them. Has possibly a distinct nAChR binding mode from other alpha-conotoxins, due to a different three residue motif (lacks the Ser-Xaa-Pro motif). The protein is Alpha-conotoxin-like Pu1.1 of Conus pulicarius (Flea-bitten cone).